We begin with the raw amino-acid sequence, 427 residues long: UDP-N-acetylglucosamine 1-carboxyvinyltransferase (427 aa).

22–23 lines the phosphoenolpyruvate pocket; sequence KN. Residue Arg99 participates in UDP-N-acetyl-alpha-D-glucosamine binding. The active-site Proton donor is Cys123. Residue Cys123 is modified to 2-(S-cysteinyl)pyruvic acid O-phosphothioketal. Residues 128–132, Asp313, and Ile335 each bind UDP-N-acetyl-alpha-D-glucosamine; that span reads RPIDL.

It belongs to the EPSP synthase family. MurA subfamily.

The protein resides in the cytoplasm. It catalyses the reaction phosphoenolpyruvate + UDP-N-acetyl-alpha-D-glucosamine = UDP-N-acetyl-3-O-(1-carboxyvinyl)-alpha-D-glucosamine + phosphate. It participates in cell wall biogenesis; peptidoglycan biosynthesis. Its function is as follows. Cell wall formation. Adds enolpyruvyl to UDP-N-acetylglucosamine. The protein is UDP-N-acetylglucosamine 1-carboxyvinyltransferase of Novosphingobium aromaticivorans (strain ATCC 700278 / DSM 12444 / CCUG 56034 / CIP 105152 / NBRC 16084 / F199).